A 217-amino-acid chain; its full sequence is uncharacterized protein (217 aa).

In terms of domain architecture, ABC transporter spans 14-217 (LAVNNLCIER…NELATEIISL (204 aa)). 46–53 (GEIGSGKT) is an ATP binding site.

It belongs to the ABC transporter superfamily.

This is an uncharacterized protein from Haemophilus influenzae (strain ATCC 51907 / DSM 11121 / KW20 / Rd).